Here is a 138-residue protein sequence, read N- to C-terminus: Ig heavy chain V region TEPC 1017 (138 aa).

Residues 1–20 (MGWSYIILFLVATATDVHSQ) form the signal peptide. The framework-1 stretch occupies residues 21–49 (VQLQQPGAELVKPGASVQLSCKASGHTFT). An intrachain disulfide couples Cys41 to Cys115. Residues 50–54 (NYWIH) form a complementarity-determining-1 region. Positions 55–68 (WVKQRPGQGLEWIG) are framework-2. The complementarity-determining-2 stretch occupies residues 69–85 (EINPNDGRSNYNEKFKN). Residues 86–117 (KATLTVDKSSSTAYMQLSSLTPEEFAVYYCAR) form a framework-3 region. Residues 118 to 127 (SDGYYDWFVY) are complementarity-determining-3. Residues 128-138 (WGQGTLVTFSA) are framework-4.

The protein is Ig heavy chain V region TEPC 1017 of Mus musculus (Mouse).